Consider the following 461-residue polypeptide: tRNA modification GTPase MnmE (461 aa).

(6S)-5-formyl-5,6,7,8-tetrahydrofolate is bound by residues arginine 27, glutamate 89, and arginine 128. In terms of domain architecture, TrmE-type G spans 224–382 (GLATAIVGRP…LENAIEKLFF (159 aa)). K(+) is bound at residue asparagine 234. Residues 234 to 239 (NVGKSS), 253 to 259 (TDIAGTT), and 278 to 281 (DTAG) contribute to the GTP site. Serine 238 serves as a coordination point for Mg(2+). K(+)-binding residues include threonine 253, isoleucine 255, and threonine 258. Threonine 259 is a binding site for Mg(2+). Residue lysine 461 participates in (6S)-5-formyl-5,6,7,8-tetrahydrofolate binding.

This sequence belongs to the TRAFAC class TrmE-Era-EngA-EngB-Septin-like GTPase superfamily. TrmE GTPase family. As to quaternary structure, homodimer. Heterotetramer of two MnmE and two MnmG subunits. The cofactor is K(+).

It localises to the cytoplasm. Functionally, exhibits a very high intrinsic GTPase hydrolysis rate. Involved in the addition of a carboxymethylaminomethyl (cmnm) group at the wobble position (U34) of certain tRNAs, forming tRNA-cmnm(5)s(2)U34. This Lactobacillus gasseri (strain ATCC 33323 / DSM 20243 / BCRC 14619 / CIP 102991 / JCM 1131 / KCTC 3163 / NCIMB 11718 / NCTC 13722 / AM63) protein is tRNA modification GTPase MnmE.